A 563-amino-acid polypeptide reads, in one-letter code: MDTKHLIASEIQKVVPDMEQSTILSLLETPKNSSMGDLAFPAFSLAKTLRKAPQIIASDIAEQIKSDQFEKVEAVGPYVNFFLDKAAISSQVLKQVLSDGSAYATQNIGEGRNVAIDMSSPNIAKPFSIGHLRSTVIGDSLANIFDKIGYHPVKINHLGDWGKQFGMLIVAYKKWGNEEAVRAHPIDELLKLYVRINAEAETDPSVDEEAREWFRKLEANDPEATELWQWFRDESLLEFNRLYDQMNVTFDSYNGEAFYNDKMDEVLELLESKNLLVESKGAQVVNLEKYGIEHPALIKKSDGATLYITRDLAAALYRKRTYDFAKSIYVVGNEQSAHFKQLKAVLKEMDYDWSDDMTHVPFGLVTKGGAKLSTRKGNVILLEPTVAEAINRAASQIEAKNPNLADKDKVAQAVGVGAIKFYDLKTDRTNGYDFDLEAMVSFEGETGPYVQYAHARIQSILRKANFNPSNSDNYSLNDVESWEIIKLIQDFPRIIVRAADNFEPSIIAKFAINLAQCFNKYYAHTRILDEDAEISSRLALCYATATVLKESLRLLGVDAPNEM.

The 'HIGH' region motif lies at 121–131 (PNIAKPFSIGH).

The protein belongs to the class-I aminoacyl-tRNA synthetase family. As to quaternary structure, monomer.

The protein localises to the cytoplasm. The catalysed reaction is tRNA(Arg) + L-arginine + ATP = L-arginyl-tRNA(Arg) + AMP + diphosphate. This is Arginine--tRNA ligase from Streptococcus agalactiae serotype III (strain NEM316).